The chain runs to 386 residues: Probable Xaa-Pro aminopeptidase PMAA_074180 (386 aa).

Residues Asp160, Asp171, Glu311, and Glu350 each coordinate Mn(2+).

This sequence belongs to the peptidase M24B family. Mn(2+) is required as a cofactor.

It carries out the reaction Release of any N-terminal amino acid, including proline, that is linked to proline, even from a dipeptide or tripeptide.. In terms of biological role, catalyzes the removal of a penultimate prolyl residue from the N-termini of peptides. This Talaromyces marneffei (strain ATCC 18224 / CBS 334.59 / QM 7333) (Penicillium marneffei) protein is Probable Xaa-Pro aminopeptidase PMAA_074180.